A 113-amino-acid chain; its full sequence is U11-theraphotoxin-Hhn1e (113 aa).

A signal peptide spans 1–21 (MNTVRVTFLLVFVLAVSLGQA). Positions 22–74 (DKDENRMEMLEKTEQGKSYLDFAENLLLQKLEELEARLLEEDSEESRNSRQKR) are excised as a propeptide. Residues 60–69 (LEEDSEESRN) show a composition bias toward basic and acidic residues. The disordered stretch occupies residues 60-87 (LEEDSEESRNSRQKRCIGEGVPRDENDP). 2 disulfides stabilise this stretch: cysteine 75–cysteine 90 and cysteine 89–cysteine 110.

It belongs to the neurotoxin 14 (magi-1) family. 01 (HNTX-16) subfamily. Expressed by the venom gland.

The protein resides in the secreted. Its function is as follows. Probable ion channel inhibitor. This Cyriopagopus hainanus (Chinese bird spider) protein is U11-theraphotoxin-Hhn1e.